Reading from the N-terminus, the 790-residue chain is LPS-assembly protein LptD (790 aa).

The first 20 residues, 1-20 (MRMLRWLILSAFSVAGAVQA), serve as a signal peptide directing secretion.

Belongs to the LptD family. Component of the lipopolysaccharide transport and assembly complex. Interacts with LptE and LptA.

The protein localises to the cell outer membrane. Functionally, together with LptE, is involved in the assembly of lipopolysaccharide (LPS) at the surface of the outer membrane. The polypeptide is LPS-assembly protein LptD (Bordetella pertussis (strain Tohama I / ATCC BAA-589 / NCTC 13251)).